Reading from the N-terminus, the 403-residue chain is Ubiquitin-like modifier-activating enzyme 5 (403 aa).

5 residues coordinate ATP: glycine 81, aspartate 102, lysine 125, asparagine 148, and asparagine 182. The Zn(2+) site is built by cysteine 224 and cysteine 227. The active-site Glycyl thioester intermediate is cysteine 248. 2 residues coordinate Zn(2+): cysteine 301 and cysteine 306. Over residues 306-315 (CRKQQEEYKK) the composition is skewed to basic and acidic residues. The disordered stretch occupies residues 306–337 (CRKQQEEYKKRAPAQPTQETAPQEEEEVVHED). The UFM1-interacting sequence (UIS) motif lies at 333-345 (VVHEDNEWGIELV). A linker region spans residues 346–376 (SEVSEEELKNSSGPVPTLPEGITVAYTVPKK). Serine 357 and serine 392 each carry phosphoserine. Positions 388–403 (DSGESLEDLMARMKKM) match the UFC1-binding sequence (UFC) motif.

The protein belongs to the ubiquitin-activating E1 family. UBA5 subfamily. As to quaternary structure, homodimer; homodimerization is required for UFM1 activation. Interacts (via UIS motif) with UFM1; binds UFM1 via a trans-binding mechanism in which UFM1 interacts with distinct sites in both subunits of the UBA5 homodimer. Interacts (via C-terminus) with UFC1. Interacts (via UIS motif) with GABARAPL2 and, with lower affinity, with GABARAP and GABARAPL1.

Its subcellular location is the cytoplasm. It localises to the nucleus. The protein localises to the endoplasmic reticulum membrane. The protein resides in the golgi apparatus. Its function is as follows. E1-like enzyme which specifically catalyzes the first step in ufmylation. Activates UFM1 by first adenylating its C-terminal glycine residue with ATP, and thereafter linking this residue to the side chain of a cysteine residue in E1, yielding a UFM1-E1 thioester and free AMP. Activates UFM1 via a trans-binding mechanism, in which UFM1 interacts with distinct sites in both subunits of the UBA5 homodimer. Trans-binding also promotes stabilization of the UBA5 homodimer, and enhances ATP-binding. Transfer of UFM1 from UBA5 to the E2-like enzyme UFC1 also takes place using a trans mechanism. Ufmylation plays a key role in various processes, such as ribosome recycling, response to DNA damage, interferon response or reticulophagy (also called ER-phagy). Ufmylation is essential for erythroid differentiation of both megakaryocytes and erythrocytes. The protein is Ubiquitin-like modifier-activating enzyme 5 of Rattus norvegicus (Rat).